The primary structure comprises 347 residues: GMP reductase (347 aa).

108 to 131 lines the NADP(+) pocket; sequence ADFDKMKQILALSPALKFICIDVA. The K(+) site is built by G181 and G183. C186 functions as the Thioimidate intermediate in the catalytic mechanism. 216-239 is an NADP(+) binding site; sequence IVSDGGCSVPGDVAKAFGGGADFV.

The protein belongs to the IMPDH/GMPR family. GuaC type 1 subfamily. In terms of assembly, homotetramer.

The enzyme catalyses IMP + NH4(+) + NADP(+) = GMP + NADPH + 2 H(+). In terms of biological role, catalyzes the irreversible NADPH-dependent deamination of GMP to IMP. It functions in the conversion of nucleobase, nucleoside and nucleotide derivatives of G to A nucleotides, and in maintaining the intracellular balance of A and G nucleotides. This chain is GMP reductase, found in Yersinia enterocolitica serotype O:8 / biotype 1B (strain NCTC 13174 / 8081).